Here is a 198-residue protein sequence, read N- to C-terminus: Recombination protein RecR (198 aa).

Residues 57–72 form a C4-type zinc finger; that stretch reads CSVCGHITENDPCYIC. In terms of domain architecture, Toprim spans 80–175; the sequence is SVICVVEDDK…KVTRLAQGLS (96 aa).

The protein belongs to the RecR family.

Functionally, may play a role in DNA repair. It seems to be involved in an RecBC-independent recombinational process of DNA repair. It may act with RecF and RecO. This chain is Recombination protein RecR, found in Staphylococcus aureus (strain JH1).